Consider the following 215-residue polypeptide: MEKLYSENEGMASNQGKMENEEQPQDERKPEVTCTLEDKKLENEGKTENKGKTGDEEMLKDKGKPESEGEAKEGKSEREGESEMEGGSEREGKPEIEGKPESEGEPGSETRAAGKRPAEDDVPRKAKRKTNKGLAHYLKEYKEAIHDMNFSNEDMIREFDNMAKVQDEKRKSKQKLGAFLWMQRNLQDPFYPRGPREFRGGCRAPRRDIEDIPYV.

Position 1 is an N-acetylmethionine (M1). Residues 1 to 133 (MEKLYSENEG…RKAKRKTNKG (133 aa)) are disordered. Phosphoserine occurs at positions 6, 88, and 102. Positions 25 to 102 (QDERKPEVTC…KPEIEGKPES (78 aa)) are enriched in basic and acidic residues.

This sequence belongs to the TFS-II family. TFA subfamily.

The protein localises to the nucleus. Its function is as follows. May be involved in transcriptional regulation. This Homo sapiens (Human) protein is Transcription elongation factor A protein-like 4 (TCEAL4).